The primary structure comprises 490 residues: O-acetyltransferase PaAT-2 (490 aa).

His-165 functions as the Proton acceptor in the catalytic mechanism.

The protein belongs to the plant acyltransferase family.

It functions in the pathway mycotoxin biosynthesis. In terms of biological role, O-acetyltransferase; part of the 2 gene clusters that mediate the biosynthesis of fusicoccins, diterpene glucosides that display phytohormone-like activity and function as potent activators of plasma membrane H(+)-ATPases in plants by modifying 14-3-3 proteins and cause the plant disease constriction canker. The first step in the pathway is performed by the fusicoccadiene synthase PaFS that possesses both prenyl transferase and terpene cyclase activity, converting isopentenyl diphosphate and dimethylallyl diphosphate into geranylgeranyl diphosphate (GGDP) and successively converting GGDP into fusicocca-2,10(14)-diene, a precursor for fusicoccin H. The second step is the oxidation at the C-8 position by the cytochrome P450 monooxygenase PaP450-2 to yield fusicocca-2,10(14)-diene-8-beta-ol. The cytochrome P450 monooxygenase PaP450-1 then catalyzes the hydroxylation at the C-16 position to produce fusicocca-2,10(14)-diene-8-beta,16-diol. The dioxygenase fc-dox then catalyzes the 16-oxydation of fusicocca-2,10(14)-diene-8-beta,16-diol to yield an aldehyde (8-beta-hydroxyfusicocca-1,10(14)-dien-16-al). The short-chain dehydrogenase/reductase fc-sdr catalyzes the reduction of the aldehyde to yield fusicocca-1,10(14)-diene-8-beta,16-diol. The next step is the hydroxylation at C-9 performed by the cytochrome P450 monooxygenase PaP450-3 that leads to fusicoccin H aglycon which is glycosylated to fusicoccin H by the O-glycosyltransferase PaGT. Hydroxylation at C-12 by the cytochrome P450 monooxygenase PaP450-4 leads then to the production of fusicoccin Q and is followed by methylation by the O-methyltransferase PaMT to yield fusicoccin P. Fusicoccin P is further converted to fusicoccin J via prenylation by the O-glucose prenyltransferase PaPT. Cytochrome P450 monooxygenase PaP450-5 then performs hydroxylation at C-19 to yield dideacetyl-fusicoccin A which is acetylated to 3'-O-deacetyl-fusicoccin A by the O-acetyltransferase PaAT-2. Finally, a another acetylation by the O-acetyltransferase PaAT-1 yields fusicoccin A. This Phomopsis amygdali (Fusicoccum amygdali) protein is O-acetyltransferase PaAT-2.